Here is a 361-residue protein sequence, read N- to C-terminus: Phospho-N-acetylmuramoyl-pentapeptide-transferase (361 aa).

Transmembrane regions (helical) follow at residues 27–47 (GALF…ISLL), 72–92 (TPTM…LLWA), 99–119 (VWIT…DDYL), 139–159 (ALIA…GLAY), 169–189 (AIVN…VGAG), 200–220 (GLAI…AYLV), 240–260 (LAVV…FNAP), 264–284 (IFMG…VAVA), 289–309 (IVLA…IIQV), and 338–358 (QVVI…LATL).

This sequence belongs to the glycosyltransferase 4 family. MraY subfamily. It depends on Mg(2+) as a cofactor.

Its subcellular location is the cell inner membrane. The enzyme catalyses UDP-N-acetyl-alpha-D-muramoyl-L-alanyl-gamma-D-glutamyl-meso-2,6-diaminopimeloyl-D-alanyl-D-alanine + di-trans,octa-cis-undecaprenyl phosphate = di-trans,octa-cis-undecaprenyl diphospho-N-acetyl-alpha-D-muramoyl-L-alanyl-D-glutamyl-meso-2,6-diaminopimeloyl-D-alanyl-D-alanine + UMP. It functions in the pathway cell wall biogenesis; peptidoglycan biosynthesis. Catalyzes the initial step of the lipid cycle reactions in the biosynthesis of the cell wall peptidoglycan: transfers peptidoglycan precursor phospho-MurNAc-pentapeptide from UDP-MurNAc-pentapeptide onto the lipid carrier undecaprenyl phosphate, yielding undecaprenyl-pyrophosphoryl-MurNAc-pentapeptide, known as lipid I. The chain is Phospho-N-acetylmuramoyl-pentapeptide-transferase from Methylobacterium nodulans (strain LMG 21967 / CNCM I-2342 / ORS 2060).